A 425-amino-acid polypeptide reads, in one-letter code: Nicotinate dehydrogenase large molybdopterin subunit (425 aa).

Residues Gln208 and 238–240 (GFG) contribute to the Se-Mo-molybdopterin cytosine dinucleotide site.

Belongs to the xanthine dehydrogenase family. As to quaternary structure, heterooctamer of NDHM, NDHL, NDHS and NDHF. Dimer of heterotetramers. It depends on Se-Mo-molybdopterin cytosine dinucleotide as a cofactor.

It carries out the reaction nicotinate + NADP(+) + H2O = 6-hydroxynicotinate + NADPH + H(+). It functions in the pathway cofactor degradation; nicotinate degradation; 6-hydroxynicotinate from nicotinate: step 1/1. Reversibly inactivated by selenide and sulfide. Not inhibited by cyanide. In terms of biological role, catalyzes the hydroxylation of nicotinate to 6-hydroxynicotinate. Also active against 2-pyrazinecarboxylic acid, but inactive against other nicotinate analogs. This is Nicotinate dehydrogenase large molybdopterin subunit (ndhL) from Eubacterium barkeri (Clostridium barkeri).